A 95-amino-acid polypeptide reads, in one-letter code: MKGSSALLLVALSLLCVCGLTRAEDDNEFFMEFLQTLLVGTPEELYEGPLGKYNVNDMAKSALRELKSCIDELQPVHKEQLVKLLVQVLDAQEDT.

The N-terminal stretch at 1–23 is a signal peptide; the sequence is MKGSSALLLVALSLLCVCGLTRA.

It belongs to the secretoglobin family.

It is found in the secreted. This is Secretoglobin family 1C member 1 (Scgb1c1) from Mus musculus (Mouse).